The chain runs to 280 residues: Band 7 protein AGAP004871 (280 aa).

A helical transmembrane segment spans residues 23 to 43 (ILIFLSWVLVVLTMPFSLLVC).

Belongs to the band 7/mec-2 family.

Its subcellular location is the membrane. The chain is Band 7 protein AGAP004871 from Anopheles gambiae (African malaria mosquito).